The following is a 145-amino-acid chain: Large ribosomal subunit protein uL15 (145 aa).

A disordered region spans residues 20-39; it reads GRVGKHRKHPSGRGNAGGEH.

It belongs to the universal ribosomal protein uL15 family.

The polypeptide is Large ribosomal subunit protein uL15 (RPL27A) (Trypanosoma brucei brucei).